The sequence spans 420 residues: Phosphoribosylamine--glycine ligase (420 aa).

In terms of domain architecture, ATP-grasp spans 108 to 314; that stretch reads KEIMVKYGVS…FAQNITDILD (207 aa). Position 134-195 (134-195) interacts with ATP; the sequence is IEKHGAPIVV…EEFLEGEEFS (62 aa). Positions 284 and 286 each coordinate Mg(2+).

This sequence belongs to the GARS family. The cofactor is Mg(2+). Mn(2+) serves as cofactor.

It carries out the reaction 5-phospho-beta-D-ribosylamine + glycine + ATP = N(1)-(5-phospho-beta-D-ribosyl)glycinamide + ADP + phosphate + H(+). It participates in purine metabolism; IMP biosynthesis via de novo pathway; N(1)-(5-phospho-D-ribosyl)glycinamide from 5-phospho-alpha-D-ribose 1-diphosphate: step 2/2. In Streptococcus pneumoniae (strain ATCC BAA-255 / R6), this protein is Phosphoribosylamine--glycine ligase.